A 448-amino-acid chain; its full sequence is Chaperone SurA (448 aa).

The N-terminal stretch at 1-27 (MKKTLRFAAVAAGLVASLITVAPSASA) is a signal peptide. PpiC domains lie at 185–288 (QQDL…RLVD) and 301–399 (IVQT…QVLG). The tract at residues 230 to 249 (LAKSQSEADDAKKGGDLGFK) is disordered.

It localises to the periplasm. It carries out the reaction [protein]-peptidylproline (omega=180) = [protein]-peptidylproline (omega=0). Chaperone involved in the correct folding and assembly of outer membrane proteins. Recognizes specific patterns of aromatic residues and the orientation of their side chains, which are found more frequently in integral outer membrane proteins. May act in both early periplasmic and late outer membrane-associated steps of protein maturation. This Burkholderia thailandensis (strain ATCC 700388 / DSM 13276 / CCUG 48851 / CIP 106301 / E264) protein is Chaperone SurA.